The chain runs to 279 residues: Energy-coupling factor transporter ATP-binding protein EcfA1 (279 aa).

The region spanning 6–240 (VRLEHVFYKY…ADAMRAIGLG (235 aa)) is the ABC transporter domain. 40–47 (GHNGSGKS) is a binding site for ATP.

The protein belongs to the ABC transporter superfamily. Energy-coupling factor EcfA family. As to quaternary structure, forms a stable energy-coupling factor (ECF) transporter complex composed of 2 membrane-embedded substrate-binding proteins (S component), 2 ATP-binding proteins (A component) and 2 transmembrane proteins (T component).

The protein localises to the cell membrane. In terms of biological role, ATP-binding (A) component of a common energy-coupling factor (ECF) ABC-transporter complex. Unlike classic ABC transporters this ECF transporter provides the energy necessary to transport a number of different substrates. The polypeptide is Energy-coupling factor transporter ATP-binding protein EcfA1 (Listeria innocua serovar 6a (strain ATCC BAA-680 / CLIP 11262)).